Consider the following 328-residue polypeptide: Tyrosine recombinase XerC (328 aa).

The Core-binding (CB) domain maps to 13-100 (QAPHPQIAAY…AWRGWFKWMA (88 aa)). Positions 122-319 (RLPKALSVEQ…DFQHLAKIYD (198 aa)) constitute a Tyr recombinase domain. Active-site residues include Arg162, Lys197, His271, Arg274, and His297. Tyr306 acts as the O-(3'-phospho-DNA)-tyrosine intermediate in catalysis.

It belongs to the 'phage' integrase family. XerC subfamily. Forms a cyclic heterotetrameric complex composed of two molecules of XerC and two molecules of XerD.

The protein resides in the cytoplasm. In terms of biological role, site-specific tyrosine recombinase, which acts by catalyzing the cutting and rejoining of the recombining DNA molecules. The XerC-XerD complex is essential to convert dimers of the bacterial chromosome into monomers to permit their segregation at cell division. It also contributes to the segregational stability of plasmids. This Ralstonia pickettii (strain 12J) protein is Tyrosine recombinase XerC.